The sequence spans 245 residues: Thioredoxin-like 1-2, chloroplastic (245 aa).

The transit peptide at 1-92 directs the protein to the chloroplast; the sequence is MDAISSLGTN…TNHNMLEIQS (92 aa). Residues 93–194 enclose the Thioredoxin domain; it reads ANHLVDSLLN…FKKALDKHGS (102 aa). Catalysis depends on nucleophile residues cysteine 117 and cysteine 120. Cysteine 117 and cysteine 120 are disulfide-bonded.

It belongs to the thioredoxin family.

The protein resides in the plastid. It is found in the chloroplast. In terms of biological role, probable thiol-disulfide oxidoreductase that may participate in various redox reactions. In Arabidopsis thaliana (Mouse-ear cress), this protein is Thioredoxin-like 1-2, chloroplastic.